Reading from the N-terminus, the 357-residue chain is Hyaluronidase (357 aa).

Positions 1–26 are cleaved as a signal peptide; sequence MLLVTLFLFFLQALVNGDSCGSNCEK. 2 disulfide bridges follow: Cys-45-Cys-334 and Cys-211-Cys-223. 2 N-linked (GlcNAc...) asparagine glycosylation sites follow: Asn-105 and Asn-125. The active-site Proton donor is Glu-135. N-linked (GlcNAc...) asparagine glycosylation is present at Asn-153. Asn-351 carries N-linked (GlcNAc...) asparagine glycosylation.

Belongs to the glycosyl hydrolase 56 family.

The protein resides in the secreted. The catalysed reaction is Random hydrolysis of (1-&gt;4)-linkages between N-acetyl-beta-D-glucosamine and D-glucuronate residues in hyaluronate.. In terms of biological role, hydrolyzes high molecular weight hyaluronic acid to produce small oligosaccharides. The polypeptide is Hyaluronidase (Vespa magnifica (Hornet)).